A 137-amino-acid polypeptide reads, in one-letter code: Putative pre-16S rRNA nuclease (137 aa).

Belongs to the YqgF nuclease family.

The protein localises to the cytoplasm. Could be a nuclease involved in processing of the 5'-end of pre-16S rRNA. In Clostridium perfringens (strain ATCC 13124 / DSM 756 / JCM 1290 / NCIMB 6125 / NCTC 8237 / Type A), this protein is Putative pre-16S rRNA nuclease.